A 1012-amino-acid chain; its full sequence is Cellulose synthase-like protein D5 (1012 aa).

Residues 1 to 81 (MSVDYANYTV…ARVPAPSSNK (81 aa)) are disordered. The segment covering 20–37 (PSGGAPPAAPSAGGARPG) has biased composition (low complexity). A compositionally biased stretch (basic and acidic residues) spans 57-69 (GGGDDGAKMDRRL). 2 helical membrane-spanning segments follow: residues 150-170 (ILSPYRLLVLVRFVALFLFLV) and 180-200 (ALWLWGISIVCEFWFAFSWLL). Asp280 is a catalytic residue. A disordered region spans residues 597–620 (PRQGSEAMPGAGGGRSGGGSVGGD). A compositionally biased stretch (gly residues) spans 606–618 (GAGGGRSGGGSVG). Residue Asp717 is part of the active site. 6 helical membrane passes run 799 to 819 (LFLIMYCLLPALSLFSGQFIV), 825 to 845 (TFLSYLLLITITLMLLCLLEV), 871 to 891 (LAAVLQGLLKVVAGIEISFTL), 914 to 934 (SLFIPPLAVIGINIIALVVGV), 948 to 968 (LLGGGFFSFWVLAHYYPFAKG), and 978 to 998 (TIVYVWAGLISITVSLLWITI).

This sequence belongs to the glycosyltransferase 2 family. Plant cellulose synthase-like D subfamily.

Its subcellular location is the golgi apparatus membrane. Its function is as follows. Thought to be a Golgi-localized beta-glycan synthase that polymerize the backbones of noncellulosic polysaccharides (hemicelluloses) of plant cell wall. The polypeptide is Cellulose synthase-like protein D5 (CSLD5) (Oryza sativa subsp. japonica (Rice)).